The following is a 1269-amino-acid chain: Clustered mitochondria protein homolog (1269 aa).

The region spanning 297–552 (PSNNGDFMRT…NTNPVDIEFV (256 aa)) is the Clu domain. A compositionally biased stretch (basic and acidic residues) spans 958-969 (EKKKEESKKAAA). The interval 958–989 (EKKKEESKKAAADGEDAGSSGATSKEEEQAKE) is disordered. TPR repeat units follow at residues 1020–1053 (VSSYLLLSNMYSRLGQYSQAVTFCNKAALLSERC) and 1147–1180 (GQNESRIANLYTSLDDMSHALSHIEKAKSIFSKE). Positions 1211 to 1269 (LASAQQATKPANISQKKGKKSSSSSPALTNKSVDELLQFIEGPGASKSSKKSKKKHTKN) are disordered. Residues 1213 to 1223 (SAQQATKPANI) show a composition bias toward polar residues. Residues 1258-1269 (SSKKSKKKHTKN) show a composition bias toward basic residues.

The protein belongs to the CLU family. As to quaternary structure, may associate with the eukaryotic translation initiation factor 3 (eIF-3) complex.

Its subcellular location is the cytoplasm. Functionally, mRNA-binding protein involved in proper cytoplasmic distribution of mitochondria. The polypeptide is Clustered mitochondria protein homolog (Kluyveromyces lactis (strain ATCC 8585 / CBS 2359 / DSM 70799 / NBRC 1267 / NRRL Y-1140 / WM37) (Yeast)).